The primary structure comprises 349 residues: Glycerol-3-phosphate dehydrogenase [NAD(P)+] (349 aa).

NADPH contacts are provided by Ser31, Phe32, Arg52, Lys53, and Lys126. Residues Lys126, Gly154, and Ser156 each contribute to the sn-glycerol 3-phosphate site. An NADPH-binding site is contributed by Ala158. The sn-glycerol 3-phosphate site is built by Lys209, Asp262, Ser272, Arg273, and Asn274. Lys209 acts as the Proton acceptor in catalysis. Residue Arg273 coordinates NADPH. Val297 and Glu299 together coordinate NADPH.

It belongs to the NAD-dependent glycerol-3-phosphate dehydrogenase family.

It is found in the cytoplasm. The catalysed reaction is sn-glycerol 3-phosphate + NAD(+) = dihydroxyacetone phosphate + NADH + H(+). The enzyme catalyses sn-glycerol 3-phosphate + NADP(+) = dihydroxyacetone phosphate + NADPH + H(+). It participates in membrane lipid metabolism; glycerophospholipid metabolism. In terms of biological role, catalyzes the reduction of the glycolytic intermediate dihydroxyacetone phosphate (DHAP) to sn-glycerol 3-phosphate (G3P), the key precursor for phospholipid synthesis. This Clostridium tetani (strain Massachusetts / E88) protein is Glycerol-3-phosphate dehydrogenase [NAD(P)+].